Reading from the N-terminus, the 84-residue chain is Dolichol phosphate-mannose biosynthesis regulatory protein (84 aa).

Helical transmembrane passes span 11-31 and 49-69; these read FGLVAVSLIIFTYYTTWVILL and YAVLIPLATGLLLLLFVGLFI.

This sequence belongs to the DPM2 family. Component of the dolichol-phosphate mannose (DPM) synthase complex composed of DPM1, DPM2 and DPM3; in the complex interacts directly with DPM3. Component of the glycosylphosphatidylinositol-N-acetylglucosaminyltransferase (GPI-GnT) complex composed at least by PIGA, PIGC, PIGH, PIGP, PIGQ, PIGY and DPM2. Interacts with PIGA, PIGC and PIGQ.

The protein resides in the endoplasmic reticulum membrane. It functions in the pathway protein modification; protein glycosylation. Functionally, regulates the biosynthesis of dolichol phosphate-mannose. Regulatory subunit of the dolichol-phosphate mannose (DPM) synthase complex; essential for the ER localization and stable expression of DPM1. Part of the glycosylphosphatidylinositol-N-acetylglucosaminyltransferase (GPI-GnT) complex that catalyzes the transfer of N-acetylglucosamine from UDP-N-acetylglucosamine to phosphatidylinositol and participates in the first step of GPI biosynthesis. May act by regulating the GPI-GNT complex. This is Dolichol phosphate-mannose biosynthesis regulatory protein from Cricetulus griseus (Chinese hamster).